The chain runs to 291 residues: MKTFPILALLAIVATTATTAVRVPVPQLQLQNPSQQQPQEQVPLVQEQQFQGQQQPFPPQQPYPQPQPFPSQQPYLQLQPFPQPQLPYPQPQPFRPQQPYPQPQPQYSQPQQPISQQQQQQQQQQQQQQQILQQILQQQLIPCRDVVLQQHNIAHGSSQVLQESTYQLVQQLCCQQLWQIPEQSRCQAIHNVVHAIILHQQHHHHQQQQQQQQQQPLSQVSFQQPQQQYPSGQGFFQPSQQNPQAQGSFQPQQLPQFEEIRNLALQTLPAMCNVYIPPYCTIAPFGIFGTN.

Positions 1–20 are cleaved as a signal peptide; it reads MKTFPILALLAIVATTATTA. Residues 32 to 55 are compositionally biased toward low complexity; it reads NPSQQQPQEQVPLVQEQQFQGQQQ. 2 disordered regions span residues 32 to 120 and 227 to 250; these read NPSQ…QQQQ and QQYPSGQGFFQPSQQNPQAQGSFQ. Composition is skewed to pro residues over residues 56–71 and 81–104; these read PFPPQQPYPQPQPFPS and FPQPQLPYPQPQPFRPQQPYPQPQ. Composition is skewed to low complexity over residues 105–120 and 227–237; these read PQYSQPQQPISQQQQQ and QQYPSGQGFFQ. Positions 238–250 are enriched in polar residues; it reads PSQQNPQAQGSFQ.

This sequence belongs to the gliadin/glutenin family. In terms of processing, substrate of transglutaminase.

In terms of biological role, gliadin is the major seed storage protein in wheat. The sequence is that of Alpha/beta-gliadin A-II from Triticum aestivum (Wheat).